A 33-amino-acid polypeptide reads, in one-letter code: Photosystem II reaction center protein Psb30 (33 aa).

The helical transmembrane segment at 5–25 (VIAQLASLALIIVLGPLVIGL) threads the bilayer.

It belongs to the Psb30/Ycf12 family. In terms of assembly, PSII is composed of 1 copy each of membrane proteins PsbA, PsbB, PsbC, PsbD, PsbE, PsbF, PsbH, PsbI, PsbJ, PsbK, PsbL, PsbM, PsbT, PsbX, PsbY, PsbZ, Psb30/Ycf12, peripheral proteins of the oxygen-evolving complex and a large number of cofactors. It forms dimeric complexes.

It localises to the plastid. Its subcellular location is the chloroplast thylakoid membrane. In terms of biological role, a core subunit of photosystem II (PSII), probably helps stabilize the reaction center. This Chara vulgaris (Common stonewort) protein is Photosystem II reaction center protein Psb30.